The following is a 244-amino-acid chain: Small ribosomal subunit protein uS2 (244 aa).

It belongs to the universal ribosomal protein uS2 family.

This Endomicrobium trichonymphae protein is Small ribosomal subunit protein uS2.